Here is a 1778-residue protein sequence, read N- to C-terminus: Internalin I (1778 aa).

Residues 1–28 (MKKKFSIVIISVLLLGYLAPFDTLLVGA) form the signal peptide. The disordered stretch occupies residues 36-101 (DTAVKTAEAD…NIKTEINTDK (66 aa)). The span at 51–62 (IESETGSDDETA) shows a compositional bias: acidic residues. Residues 63–88 (EEPKEAKEAEASKETTEKEEKAKTEE) show a composition bias toward basic and acidic residues. 27 LRR repeats span residues 155–179 (AISQ…EGLQ), 183–204 (NLTS…KDLV), 205–227 (NLVS…EDLV), 228–250 (NLQE…ASLP), 251–272 (VLKE…NPAG), 277–298 (ELET…AKLP), 299–321 (KLKN…NGAT), 322–344 (KLQL…SGLS), 345–367 (ELEM…KNLP), 368–389 (NLVN…NNLP), 390–412 (KLQT…TDLP), 413–434 (QLKT…DNLP), 435–456 (KLEK…TDLP), 457–478 (RLSY…KKLP), 479–500 (LLEW…TNFP), 501–522 (SLNY…TELP), 523–544 (SLKE…HDMP), 545–566 (NLRK…DNLP), 567–588 (KLQS…HDLP), 589–610 (SLET…DNLP), 611–632 (DLTY…GDLP), 633–653 (NLET…GTMD), 657–678 (KLRI…GNLS), 685–707 (NLTE…STLS), 708–729 (RLIY…SNLT), 730–751 (NLQE…SDLE), and 752–773 (NLNK…ANMV). In terms of domain architecture, LRRCT spans 785 to 872 (TYTLPTVLSY…SAAKVTADAE (88 aa)). MucBP domains lie at 1510 to 1569 (DAAA…EQTV), 1575 to 1634 (AIKP…PQTI), and 1644 to 1705 (SKKS…SQTV). The interval 1716–1742 (SKDDPKVKGKTNQPSSTDTKLKVDNNS) is disordered. A compositionally biased stretch (polar residues) spans 1725–1742 (KTNQPSSTDTKLKVDNNS). The short motif at 1743–1747 (LPATG) is the LPXTG sorting signal element. At Thr1746 the chain carries Pentaglycyl murein peptidoglycan amidated threonine. Positions 1747–1778 (GDTENMILAVLIGFNMLIVASIFLFRKPKTNQ) are cleaved as a propeptide — removed by sortase.

The protein belongs to the internalin family.

Its subcellular location is the secreted. The protein resides in the cell wall. A role in virulence could not be demonstrated. In Listeria monocytogenes serovar 1/2a (strain ATCC BAA-679 / EGD-e), this protein is Internalin I (inlI).